Consider the following 123-residue polypeptide: MPTIKQLIRNTRQPIRNVTKSPALGGCPQRRGTCTRVYTITPKKPNSALRKVARVRLTSGFEITAYIPGIGHNSQEHSVVLVRGGRVKDLPGVRYHIVRGTLDAVGVKDRQQGRSKYGVKKPK.

This sequence belongs to the universal ribosomal protein uS12 family. In terms of assembly, part of the 30S ribosomal subunit.

The protein localises to the plastid. It is found in the chloroplast. With S4 and S5 plays an important role in translational accuracy. Located at the interface of the 30S and 50S subunits. In Populus alba (White poplar), this protein is Small ribosomal subunit protein uS12cz/uS12cy (rps12-A).